Reading from the N-terminus, the 146-residue chain is Large ribosomal subunit protein uL15 (146 aa).

The disordered stretch occupies residues 1–51 (MKLHELQPAPGSRKERNRVGRGIGSGNGKTSGKGHKGQNARSGGGVRIGFE). Composition is skewed to gly residues over residues 21–31 (RGIGSGNGKTS) and 42–51 (SGGGVRIGFE).

Belongs to the universal ribosomal protein uL15 family. As to quaternary structure, part of the 50S ribosomal subunit.

Binds to the 23S rRNA. In Anoxybacillus flavithermus (strain DSM 21510 / WK1), this protein is Large ribosomal subunit protein uL15.